The primary structure comprises 128 residues: Sulfurtransferase TusD (128 aa).

C78 functions as the Cysteine persulfide intermediate in the catalytic mechanism.

This sequence belongs to the DsrE/TusD family. In terms of assembly, heterohexamer, formed by a dimer of trimers. The hexameric TusBCD complex contains 2 copies each of TusB, TusC and TusD. The TusBCD complex interacts with TusE.

The protein localises to the cytoplasm. Functionally, part of a sulfur-relay system required for 2-thiolation of 5-methylaminomethyl-2-thiouridine (mnm(5)s(2)U) at tRNA wobble positions. Accepts sulfur from TusA and transfers it in turn to TusE. The protein is Sulfurtransferase TusD of Escherichia coli O127:H6 (strain E2348/69 / EPEC).